The following is a 143-amino-acid chain: Transcriptional regulator MraZ (143 aa).

SpoVT-AbrB domains follow at residues 5–47 (EYHH…PIEE) and 76–119 (AMES…SAER).

It belongs to the MraZ family. Forms oligomers.

It is found in the cytoplasm. The protein resides in the nucleoid. The chain is Transcriptional regulator MraZ from Lactobacillus johnsonii (strain CNCM I-12250 / La1 / NCC 533).